Reading from the N-terminus, the 154-residue chain is Ribonuclease H (154 aa).

In terms of domain architecture, RNase H type-1 spans 9–150 (SHPHIIIYTD…ADALANKGVE (142 aa)). Residues Asp-18, Glu-56, Asp-78, and Asp-142 each coordinate Mg(2+).

Belongs to the RNase H family. As to quaternary structure, monomer. Mg(2+) serves as cofactor.

The protein localises to the cytoplasm. It carries out the reaction Endonucleolytic cleavage to 5'-phosphomonoester.. Endonuclease that specifically degrades the RNA of RNA-DNA hybrids. In Polynucleobacter asymbioticus (strain DSM 18221 / CIP 109841 / QLW-P1DMWA-1) (Polynucleobacter necessarius subsp. asymbioticus), this protein is Ribonuclease H.